Reading from the N-terminus, the 293-residue chain is Probable chromosome 2-partitioning protein ParB (293 aa).

It belongs to the ParB family.

Involved in chromosome partition. Localize to both poles of the predivisional cell following completion of DNA replication. Binds to the DNA origin of replication. The sequence is that of Probable chromosome 2-partitioning protein ParB (parB2) from Deinococcus radiodurans (strain ATCC 13939 / DSM 20539 / JCM 16871 / CCUG 27074 / LMG 4051 / NBRC 15346 / NCIMB 9279 / VKM B-1422 / R1).